We begin with the raw amino-acid sequence, 4306 residues long: Cytoplasmic dynein 2 heavy chain 1 (4306 aa).

The tract at residues 1 to 1650 (MAGSLSDVRK…YVQMVDSELQ (1650 aa)) is stem. 145–152 (LGVVLRKS) lines the ATP pocket. A coiled-coil region spans residues 669 to 696 (KELEGYIQKLQNAAERLATENRRLRKWH). AAA stretches follow at residues 1651-1875 (YTYE…VLRG), 1941-2161 (SALK…KQND), 2249-2505 (LTAD…WVLG), and 2617-2862 (HYGR…ESCK). Residues 1689–1696 (GPAGTGKT), 1979–1986 (GPSGAGKS), 2291–2298 (GPEGCGKG), and 2655–2662 (GRSGVGRR) each bind ATP. Positions 2880–3168 (AISSSKRKEL…AEVSKAQETI (289 aa)) are stalk. Coiled-coil stretches lie at residues 2896–2981 (LQAG…KEVQ), 3108–3199 (LETE…LATL), and 3407–3441 (IQHEKPDLEEQKTKLLQQEEDKKIQLARLEESLLE). AAA regions lie at residues 3243–3472 (LCTE…LIQD) and 3689–3904 (MALF…VIDR).

It belongs to the dynein heavy chain family. In terms of assembly, the cytoplasmic dynein complex 2 is probably composed by a heavy chain DYNC2H1 homodimer and a number of DYNC2LI1 light intermediate chains. Widely expressed both in ciliated and unciliated tissues. Detected in brain and testis (at protein level).

The protein resides in the cytoplasm. The protein localises to the cytoskeleton. It is found in the cilium axoneme. Its subcellular location is the cell membrane. In terms of biological role, may function as a motor for intraflagellar retrograde transport. Functions in cilia biogenesis. May play a role in transport between endoplasmic reticulum and Golgi or organization of the Golgi in cells. This is Cytoplasmic dynein 2 heavy chain 1 (Dync2h1) from Rattus norvegicus (Rat).